The chain runs to 115 residues: Putative ethidium bromide resistance protein (115 aa).

4 consecutive transmembrane segments (helical) span residues W4–L21, L30–L47, V58–H79, and A85–P104.

Belongs to the drug/metabolite transporter (DMT) superfamily. Small multidrug resistance (SMR) (TC 2.A.7.1) family.

It localises to the cell membrane. Its function is as follows. One of the determinants for resistance to ethidium bromide and quaternary ammonium compounds. This is Putative ethidium bromide resistance protein (ebr) from Escherichia coli.